An 800-amino-acid polypeptide reads, in one-letter code: Phenylalanine--tRNA ligase beta subunit (800 aa).

The region spanning Ser39–Leu154 is the tRNA-binding domain. Positions Ser408–Ser483 constitute a B5 domain. Residues Asp461, Asp467, Glu470, and Glu471 each coordinate Mg(2+). An FDX-ACB domain is found at Pro708–Arg800.

Belongs to the phenylalanyl-tRNA synthetase beta subunit family. Type 1 subfamily. In terms of assembly, tetramer of two alpha and two beta subunits. It depends on Mg(2+) as a cofactor.

The protein resides in the cytoplasm. The enzyme catalyses tRNA(Phe) + L-phenylalanine + ATP = L-phenylalanyl-tRNA(Phe) + AMP + diphosphate + H(+). The chain is Phenylalanine--tRNA ligase beta subunit from Staphylococcus haemolyticus (strain JCSC1435).